A 499-amino-acid chain; its full sequence is Ribulose bisphosphate carboxylase large chain (499 aa).

N139 and T189 together coordinate substrate. The active-site Proton acceptor is K191. K193 serves as a coordination point for substrate. The Mg(2+) site is built by K217, D219, and E220. K217 bears the N6-carboxylysine mark. H309 (proton acceptor) is an active-site residue. Residues R310, H342, and S394 each contribute to the substrate site.

It belongs to the RuBisCO large chain family. Type I subfamily. Heterohexadecamer of 8 large chains and 8 small chains. The cofactor is Mg(2+).

The catalysed reaction is 2 (2R)-3-phosphoglycerate + 2 H(+) = D-ribulose 1,5-bisphosphate + CO2 + H2O. It carries out the reaction D-ribulose 1,5-bisphosphate + O2 = 2-phosphoglycolate + (2R)-3-phosphoglycerate + 2 H(+). RuBisCO catalyzes two reactions: the carboxylation of D-ribulose 1,5-bisphosphate, the primary event in carbon dioxide fixation, as well as the oxidative fragmentation of the pentose substrate. Both reactions occur simultaneously and in competition at the same active site. In Paraburkholderia xenovorans (strain LB400), this protein is Ribulose bisphosphate carboxylase large chain.